The chain runs to 279 residues: Toxin TxP-I (279 aa).

An N-terminal signal peptide occupies residues M1–A14. Residues V15–I27 constitute a propeptide that is removed on maturation.

In terms of processing, contains several disulfide bonds. Posterior glands which appear to be connected with the stylet through a series of ducts.

The protein localises to the secreted. Its function is as follows. Part of a complex mixture of neurotoxins which P.tritici utilizes to capture prey. It has contracting-paralyzing activity in insects. The chain is Toxin TxP-I from Pyemotes tritici (Straw itch mite).